A 541-amino-acid chain; its full sequence is Carboxypeptidase Y homolog A (541 aa).

An N-terminal signal peptide occupies residues 1–17 (MKLLMTGLLASAAVAAA). Residues 18–122 (QEQQVLQAEG…KLQSYDLRVK (105 aa)) constitute a propeptide that is removed on maturation. Intrachain disulfides connect Cys177-Cys417, Cys311-Cys325, Cys335-Cys358, Cys342-Cys351, and Cys380-Cys387. N-linked (GlcNAc...) asparagine glycosylation occurs at Asn208. Residue Ser264 is part of the active site. Residue Asp456 is part of the active site. The N-linked (GlcNAc...) asparagine glycan is linked to Asn507. Residue His518 is part of the active site.

The protein belongs to the peptidase S10 family.

It localises to the vacuole. It catalyses the reaction Release of a C-terminal amino acid with broad specificity.. Its function is as follows. Vacuolar carboxypeptidase involved in degradation of small peptides. Digests preferentially peptides containing an aliphatic or hydrophobic residue in P1' position, as well as methionine, leucine or phenylalanine in P1 position of ester substrate. The sequence is that of Carboxypeptidase Y homolog A (CPYA) from Arthroderma otae (strain ATCC MYA-4605 / CBS 113480) (Microsporum canis).